A 478-amino-acid chain; its full sequence is Protein nucleotidyltransferase YdiU (478 aa).

ATP is bound by residues G84, G86, R87, K107, D119, G120, R170, and R177. D246 functions as the Proton acceptor in the catalytic mechanism. Mg(2+) is bound by residues N247 and D256. D256 serves as a coordination point for ATP.

Belongs to the SELO family. It depends on Mg(2+) as a cofactor. Mn(2+) is required as a cofactor.

It catalyses the reaction L-seryl-[protein] + ATP = 3-O-(5'-adenylyl)-L-seryl-[protein] + diphosphate. The catalysed reaction is L-threonyl-[protein] + ATP = 3-O-(5'-adenylyl)-L-threonyl-[protein] + diphosphate. The enzyme catalyses L-tyrosyl-[protein] + ATP = O-(5'-adenylyl)-L-tyrosyl-[protein] + diphosphate. It carries out the reaction L-histidyl-[protein] + UTP = N(tele)-(5'-uridylyl)-L-histidyl-[protein] + diphosphate. It catalyses the reaction L-seryl-[protein] + UTP = O-(5'-uridylyl)-L-seryl-[protein] + diphosphate. The catalysed reaction is L-tyrosyl-[protein] + UTP = O-(5'-uridylyl)-L-tyrosyl-[protein] + diphosphate. Functionally, nucleotidyltransferase involved in the post-translational modification of proteins. It can catalyze the addition of adenosine monophosphate (AMP) or uridine monophosphate (UMP) to a protein, resulting in modifications known as AMPylation and UMPylation. This Escherichia coli O9:H4 (strain HS) protein is Protein nucleotidyltransferase YdiU.